The chain runs to 136 residues: Transmembrane protein 203 (136 aa).

The interval 1-51 is interaction with STING1; sequence MLFSLRELVQWLGFATFEIFVHLLALLVFSVLLALRVDGLTPGLSWWNVFV. Transmembrane regions (helical) follow at residues 14 to 34, 50 to 72, 81 to 101, and 112 to 132; these read FATF…VLLA, FVPF…VRLF, VLRL…EMLL, and LWFG…MIRA. A required for lysosomal localization of the STING-TMEM203 complex region spans residues 52-136; it reads PFFAADGLST…LLMIRACRVN (85 aa).

Homodimer. Interacts with ATP2A2 and ITPR3. Interacts with STIM1 and STING1 (via transmembrane domain).

It is found in the endoplasmic reticulum membrane. The protein localises to the endoplasmic reticulum-Golgi intermediate compartment. It localises to the lysosome membrane. Involved in the regulation of cellular calcium homeotasis. Required for spermatogenesis. Acts as a regulator of STING-mediated inflammatory signaling in macrophages. Forms a complex with STING, promoting the activity of TBK1 kinase and the transcription factor IRF3, leading to activation of type I interferon expression. The polypeptide is Transmembrane protein 203 (Tmem203) (Mus musculus (Mouse)).